A 498-amino-acid polypeptide reads, in one-letter code: ATP synthase subunit alpha 1 (498 aa).

164–171 (GNRQSGKT) is an ATP binding site.

This sequence belongs to the ATPase alpha/beta chains family. As to quaternary structure, F-type ATPases have 2 components, CF(1) - the catalytic core - and CF(0) - the membrane proton channel. CF(1) has five subunits: alpha(3), beta(3), gamma(1), delta(1), epsilon(1). CF(0) has three main subunits: a(1), b(2) and c(9-12). The alpha and beta chains form an alternating ring which encloses part of the gamma chain. CF(1) is attached to CF(0) by a central stalk formed by the gamma and epsilon chains, while a peripheral stalk is formed by the delta and b chains.

The protein resides in the cell membrane. It carries out the reaction ATP + H2O + 4 H(+)(in) = ADP + phosphate + 5 H(+)(out). Its function is as follows. Produces ATP from ADP in the presence of a proton gradient across the membrane. The alpha chain is a regulatory subunit. This is ATP synthase subunit alpha 1 from Listeria welshimeri serovar 6b (strain ATCC 35897 / DSM 20650 / CCUG 15529 / CIP 8149 / NCTC 11857 / SLCC 5334 / V8).